Consider the following 375-residue polypeptide: Serpin B5 (375 aa).

N-linked (GlcNAc...) asparagine glycans are attached at residues asparagine 99, asparagine 133, asparagine 188, and asparagine 361.

It belongs to the serpin family. Ov-serpin subfamily. In terms of assembly, interacts with IRF6. In terms of tissue distribution, normal mammary epithelial cells.

The protein localises to the secreted. Its subcellular location is the extracellular space. Functionally, tumor suppressor. It blocks the growth, invasion, and metastatic properties of mammary tumors. As it does not undergo the S (stressed) to R (relaxed) conformational transition characteristic of active serpins, it exhibits no serine protease inhibitory activity. In Homo sapiens (Human), this protein is Serpin B5 (SERPINB5).